Consider the following 109-residue polypeptide: Large ribosomal subunit protein P1A (109 aa).

The segment covering 69–84 (APVAGGAAAPAAADGE) has biased composition (low complexity). A disordered region spans residues 69–109 (APVAGGAAAPAAADGEAPAEEKEEAKEEEESDEDMGFGLFD). Residues 94–103 (KEEEESDEDM) are compositionally biased toward acidic residues.

The protein belongs to the eukaryotic ribosomal protein P1/P2 family. Component of the large ribosomal subunit (LSU). Mature yeast ribosomes consist of a small (40S) and a large (60S) subunit. The 40S small subunit contains 1 molecule of ribosomal RNA (18S rRNA) and at least 33 different proteins. The large 60S subunit contains 3 rRNA molecules (25S, 5.8S and 5S rRNA) and at least 46 different proteins. The acidic ribosomal P-proteins form the stalk structure of the 60S subunit. They are organized as a pentameric complex in which uL10/P0 interacts with 2 heterodimers of P1 and P2 proteins.

It is found in the cytoplasm. In terms of biological role, component of the ribosome, a large ribonucleoprotein complex responsible for the synthesis of proteins in the cell. The small ribosomal subunit (SSU) binds messenger RNAs (mRNAs) and translates the encoded message by selecting cognate aminoacyl-transfer RNA (tRNA) molecules. The large subunit (LSU) contains the ribosomal catalytic site termed the peptidyl transferase center (PTC), which catalyzes the formation of peptide bonds, thereby polymerizing the amino acids delivered by tRNAs into a polypeptide chain. The nascent polypeptides leave the ribosome through a tunnel in the LSU and interact with protein factors that function in enzymatic processing, targeting, and the membrane insertion of nascent chains at the exit of the ribosomal tunnel. This chain is Large ribosomal subunit protein P1A (rpp101), found in Schizosaccharomyces pombe (strain 972 / ATCC 24843) (Fission yeast).